A 190-amino-acid chain; its full sequence is UPF0301 protein PSPPH_0476 (190 aa).

The protein belongs to the UPF0301 (AlgH) family.

The sequence is that of UPF0301 protein PSPPH_0476 from Pseudomonas savastanoi pv. phaseolicola (strain 1448A / Race 6) (Pseudomonas syringae pv. phaseolicola (strain 1448A / Race 6)).